Consider the following 377-residue polypeptide: Hydrogenase maturation factor HypD (377 aa).

Residues Cys41, Cys69, and Cys72 each contribute to the Fe cation site.

It belongs to the HypD family. It depends on [4Fe-4S] cluster as a cofactor.

The protein operates within protein modification; [NiFe] hydrogenase maturation. Its function is as follows. Involved in the maturation of [NiFe] hydrogenases. Involved in the biosynthesis of the Fe(CN)(2)CO cofactor. This is Hydrogenase maturation factor HypD from Rhodobacter capsulatus (Rhodopseudomonas capsulata).